We begin with the raw amino-acid sequence, 124 residues long: uncharacterized protein (124 aa).

A compositionally biased stretch (basic residues) spans Lys62 to His72. The tract at residues Lys62–Ser86 is disordered. Positions His73–Val83 are enriched in basic and acidic residues. A coiled-coil region spans residues Glu80 to Glu112.

This is an uncharacterized protein from Dictyostelium discoideum (Social amoeba).